The sequence spans 475 residues: Putative aldehyde dehydrogenase (475 aa).

NAD(+)-binding positions include Trp-146 to Asn-147 and Gly-223 to Ser-224. Glu-245 serves as the catalytic Proton acceptor. An NAD(+)-binding site is contributed by Leu-246. The Nucleophile role is filled by Cys-279. Glu-379 serves as a coordination point for NAD(+).

Belongs to the aldehyde dehydrogenase family.

The catalysed reaction is an aldehyde + NAD(+) + H2O = a carboxylate + NADH + 2 H(+). The sequence is that of Putative aldehyde dehydrogenase from Staphylococcus aureus (strain MSSA476).